Here is a 274-residue protein sequence, read N- to C-terminus: Nitrogenase iron protein (274 aa).

8-15 (GKGGIGKS) is a binding site for ATP. Cys-94 serves as a coordination point for [4Fe-4S] cluster. Arg-97 is subject to ADP-ribosylarginine; by dinitrogenase reductase ADP-ribosyltransferase. Cys-131 provides a ligand contact to [4Fe-4S] cluster.

Belongs to the NifH/BchL/ChlL family. Homodimer. [4Fe-4S] cluster serves as cofactor. Post-translationally, the reversible ADP-ribosylation of Arg-97 inactivates the nitrogenase reductase and regulates nitrogenase activity.

The catalysed reaction is N2 + 8 reduced [2Fe-2S]-[ferredoxin] + 16 ATP + 16 H2O = H2 + 8 oxidized [2Fe-2S]-[ferredoxin] + 2 NH4(+) + 16 ADP + 16 phosphate + 6 H(+). In terms of biological role, the key enzymatic reactions in nitrogen fixation are catalyzed by the nitrogenase complex, which has 2 components: the iron protein and the molybdenum-iron protein. In Prosthecochloris aestuarii (strain DSM 271 / SK 413), this protein is Nitrogenase iron protein.